Consider the following 464-residue polypeptide: ATP synthase subunit beta (464 aa).

Residue 152–159 (GGAGVGKT) participates in ATP binding.

The protein belongs to the ATPase alpha/beta chains family. As to quaternary structure, F-type ATPases have 2 components, CF(1) - the catalytic core - and CF(0) - the membrane proton channel. CF(1) has five subunits: alpha(3), beta(3), gamma(1), delta(1), epsilon(1). CF(0) has three main subunits: a(1), b(2) and c(9-12). The alpha and beta chains form an alternating ring which encloses part of the gamma chain. CF(1) is attached to CF(0) by a central stalk formed by the gamma and epsilon chains, while a peripheral stalk is formed by the delta and b chains.

The protein resides in the cell inner membrane. It carries out the reaction ATP + H2O + 4 H(+)(in) = ADP + phosphate + 5 H(+)(out). Its function is as follows. Produces ATP from ADP in the presence of a proton gradient across the membrane. The catalytic sites are hosted primarily by the beta subunits. The sequence is that of ATP synthase subunit beta from Aliarcobacter butzleri (strain RM4018) (Arcobacter butzleri).